Reading from the N-terminus, the 160-residue chain is Phosphopantetheine adenylyltransferase (160 aa).

Serine 8 serves as a coordination point for substrate. Residues 8 to 9 (SF) and histidine 16 contribute to the ATP site. Positions 40, 72, and 86 each coordinate substrate. ATP is bound by residues 87–89 (GLR), glutamate 97, and 122–128 (YSFLSSS).

The protein belongs to the bacterial CoaD family. As to quaternary structure, homohexamer. Requires Mg(2+) as cofactor.

Its subcellular location is the cytoplasm. It carries out the reaction (R)-4'-phosphopantetheine + ATP + H(+) = 3'-dephospho-CoA + diphosphate. The protein operates within cofactor biosynthesis; coenzyme A biosynthesis; CoA from (R)-pantothenate: step 4/5. Functionally, reversibly transfers an adenylyl group from ATP to 4'-phosphopantetheine, yielding dephospho-CoA (dPCoA) and pyrophosphate. This is Phosphopantetheine adenylyltransferase from Synechococcus sp. (strain CC9311).